The chain runs to 629 residues: Dolichyl-diphosphooligosaccharide--protein glycosyltransferase subunit 2 (629 aa).

The first 22 residues, 1-22 (MAPPGSRTVLLLALTIIARTQA), serve as a signal peptide directing secretion. Residues 23-541 (LKPTHYLTKH…RDPEKRPPTV (519 aa)) lie on the Lumenal side of the membrane. N106 carries an N-linked (GlcNAc...) asparagine glycan. A Glycyl lysine isopeptide (Lys-Gly) (interchain with G-Cter in ubiquitin) cross-link involves residue K154. A helical transmembrane segment spans residues 542-562 (VSNTFTGLILSPLLLLFALWI). The Cytoplasmic portion of the chain corresponds to 563–570 (RIGAKISN). A helical transmembrane segment spans residues 571-591 (FTFGLTIIFHLGHAMLAMYVY). Topologically, residues 592–594 (WTQ) are lumenal. The helical transmembrane segment at 595–615 (LNMFQTLKYLAILGSVTFLAG) threads the bilayer. Residues 616 to 629 (NRMLAQQAIKRTAH) are Cytoplasmic-facing.

It belongs to the SWP1 family. As to quaternary structure, component of the oligosaccharyltransferase (OST) complex. OST exists in two different complex forms which contain common core subunits RPN1, RPN2, OST48, OST4, DAD1 and TMEM258, either STT3A or STT3B as catalytic subunits, and form-specific accessory subunits. STT3A complex assembly occurs through the formation of 3 subcomplexes. Subcomplex 1 contains RPN1 and TMEM258, subcomplex 2 contains the STT3A-specific subunits STT3A, DC2/OSTC, and KCP2 as well as the core subunit OST4, and subcomplex 3 contains RPN2, DAD1, and OST48. The STT3A complex can form stable complexes with the Sec61 complex or with both the Sec61 and TRAP complexes. Interacts with DDI2. Interacts with TMEM35A/NACHO.

It localises to the endoplasmic reticulum. The protein resides in the endoplasmic reticulum membrane. It functions in the pathway protein modification; protein glycosylation. Its function is as follows. Subunit of the oligosaccharyl transferase (OST) complex that catalyzes the initial transfer of a defined glycan (Glc(3)Man(9)GlcNAc(2) in eukaryotes) from the lipid carrier dolichol-pyrophosphate to an asparagine residue within an Asn-X-Ser/Thr consensus motif in nascent polypeptide chains, the first step in protein N-glycosylation. N-glycosylation occurs cotranslationally and the complex associates with the Sec61 complex at the channel-forming translocon complex that mediates protein translocation across the endoplasmic reticulum (ER). All subunits are required for a maximal enzyme activity. This chain is Dolichyl-diphosphooligosaccharide--protein glycosyltransferase subunit 2, found in Sus scrofa (Pig).